The chain runs to 201 residues: Putative 3-methyladenine DNA glycosylase (201 aa).

This sequence belongs to the DNA glycosylase MPG family.

In Clostridium novyi (strain NT), this protein is Putative 3-methyladenine DNA glycosylase.